The primary structure comprises 277 residues: Carbonyl reductase [NADPH] 1 (277 aa).

At serine 2 the chain carries N-acetylserine. Serine 2 carries the phosphoserine modification. NADP(+)-binding positions include 10-34, 63-64, and asparagine 90; these read VTGA…GDVV and DI. Residues 95–97 and glutamine 106 each bind glutathione; that span reads FKV. Serine 140 lines the substrate pocket. Position 193-194 (193-194) interacts with glutathione; sequence AY. Tyrosine 194 serves as the catalytic Proton acceptor. Residues 194-198 and 231-233 contribute to the NADP(+) site; these read YGVTK and VRT. Lysine 239 bears the N6-1-carboxyethyl lysine mark. The interval 258 to 277 is disordered; the sequence is PPGAEGPHGQFVQDKKVEPW.

This sequence belongs to the short-chain dehydrogenases/reductases (SDR) family. In terms of assembly, monomer.

It is found in the cytoplasm. The catalysed reaction is a secondary alcohol + NADP(+) = a ketone + NADPH + H(+). The enzyme catalyses prostaglandin F2alpha + NADP(+) = prostaglandin E2 + NADPH + H(+). It carries out the reaction prostaglandin E1 + NADP(+) = 15-oxoprostaglandin E1 + NADPH + H(+). It catalyses the reaction menadione + NADPH + H(+) = menadiol + NADP(+). The catalysed reaction is prostaglandin D2 + NADP(+) = 15-oxoprostaglandin D2 + NADPH + H(+). The enzyme catalyses prostaglandin E2 + NADP(+) = 15-oxoprostaglandin E2 + NADPH + H(+). It carries out the reaction prostaglandin F2alpha + NADP(+) = 15-oxoprostaglandin F2alpha + NADPH + H(+). It catalyses the reaction daunorubicin + NADPH + H(+) = 13-dihydrodaunorubicin + NADP(+). The catalysed reaction is S-nitrosoglutathione + NADPH + H(+) = S-(hydroxysulfenamide)glutathione + NADP(+). The enzyme catalyses a primary alcohol + NADP(+) = an aldehyde + NADPH + H(+). It carries out the reaction cortisol + NADPH + H(+) = 20beta-dihydrocortisol + NADP(+). It catalyses the reaction corticosterone + NADPH + H(+) = 20beta-dihydrocorticosterone + NADP(+). Functionally, NADPH-dependent reductase with broad substrate specificity. Catalyzes the reduction of a wide variety of carbonyl compounds including quinones, prostaglandins, menadione, plus various xenobiotics. Catalyzes the reduction of the antitumor anthracyclines doxorubicin and daunorubicin to the cardiotoxic compounds doxorubicinol and daunorubicinol. Can convert prostaglandin E to prostaglandin F2-alpha. Can bind glutathione, which explains its higher affinity for glutathione-conjugated substrates. Catalyzes the reduction of S-nitrosoglutathione. In addition, participates in the glucocorticoid metabolism by catalyzing the NADPH-dependent cortisol/corticosterone into 20beta-dihydrocortisol (20b-DHF) or 20beta-corticosterone (20b-DHB), which are weak agonists of NR3C1 and NR3C2 in adipose tissue. The protein is Carbonyl reductase [NADPH] 1 of Rattus norvegicus (Rat).